The primary structure comprises 482 residues: Glutamate--tRNA ligase (482 aa).

The 'HIGH' region motif lies at 9-19; that stretch reads PSPTGYLHIGG. Positions 252–256 match the 'KMSKS' region motif; it reads KLSKR. Lys255 contributes to the ATP binding site.

Belongs to the class-I aminoacyl-tRNA synthetase family. Glutamate--tRNA ligase type 1 subfamily. In terms of assembly, monomer.

Its subcellular location is the cytoplasm. It carries out the reaction tRNA(Glu) + L-glutamate + ATP = L-glutamyl-tRNA(Glu) + AMP + diphosphate. In terms of biological role, catalyzes the attachment of glutamate to tRNA(Glu) in a two-step reaction: glutamate is first activated by ATP to form Glu-AMP and then transferred to the acceptor end of tRNA(Glu). In Ureaplasma parvum serovar 3 (strain ATCC 27815 / 27 / NCTC 11736), this protein is Glutamate--tRNA ligase.